Reading from the N-terminus, the 465-residue chain is Cystathionine beta-lyase (465 aa).

The residue at position 213 (Lys-213) is an N6-(pyridoxal phosphate)lysine.

Belongs to the trans-sulfuration enzymes family. It depends on pyridoxal 5'-phosphate as a cofactor.

The protein resides in the cytoplasm. It is found in the nucleus. The enzyme catalyses L,L-cystathionine + H2O = L-homocysteine + pyruvate + NH4(+). The catalysed reaction is an S-substituted L-cysteine + H2O = a thiol + pyruvate + NH4(+). Its pathway is amino-acid biosynthesis; L-methionine biosynthesis via de novo pathway; L-homocysteine from L-cystathionine: step 1/1. The polypeptide is Cystathionine beta-lyase (STR3) (Saccharomyces cerevisiae (strain ATCC 204508 / S288c) (Baker's yeast)).